We begin with the raw amino-acid sequence, 618 residues long: Dihydroxy-acid dehydratase (618 aa).

Asp81 is a Mg(2+) binding site. Cys122 contributes to the [2Fe-2S] cluster binding site. 2 residues coordinate Mg(2+): Asp123 and Lys124. Lys124 carries the N6-carboxylysine modification. Cys195 is a [2Fe-2S] cluster binding site. Glu491 lines the Mg(2+) pocket. Ser517 acts as the Proton acceptor in catalysis.

Belongs to the IlvD/Edd family. As to quaternary structure, homodimer. [2Fe-2S] cluster is required as a cofactor. It depends on Mg(2+) as a cofactor.

It carries out the reaction (2R)-2,3-dihydroxy-3-methylbutanoate = 3-methyl-2-oxobutanoate + H2O. It catalyses the reaction (2R,3R)-2,3-dihydroxy-3-methylpentanoate = (S)-3-methyl-2-oxopentanoate + H2O. The protein operates within amino-acid biosynthesis; L-isoleucine biosynthesis; L-isoleucine from 2-oxobutanoate: step 3/4. It participates in amino-acid biosynthesis; L-valine biosynthesis; L-valine from pyruvate: step 3/4. Functions in the biosynthesis of branched-chain amino acids. Catalyzes the dehydration of (2R,3R)-2,3-dihydroxy-3-methylpentanoate (2,3-dihydroxy-3-methylvalerate) into 2-oxo-3-methylpentanoate (2-oxo-3-methylvalerate) and of (2R)-2,3-dihydroxy-3-methylbutanoate (2,3-dihydroxyisovalerate) into 2-oxo-3-methylbutanoate (2-oxoisovalerate), the penultimate precursor to L-isoleucine and L-valine, respectively. In Dechloromonas aromatica (strain RCB), this protein is Dihydroxy-acid dehydratase.